Consider the following 701-residue polypeptide: MATSHLTSRSLLVQAQYPISRLPSNLRLSLSHHKQPAAVAKRRRAPAPSHPAFSSVIRGRPKKVPIPENGEPAAGVRVTERGLAYHLDGAPFEFQYSYTETPRARPVALREAPFLPFGPEVTPRPWTGRKPLPKSRKELPEFDSFMLPPPGKKGVKPVQSPGPFLAGTEPRYQAASREEVLGEPLTKEEVDELVKATLKTKRQLNIGRDGLTHNMLENIHSHWKRKRVCKIKCKGVCTVDMDNVCQQLEEKVGGKVIHHQGGVIFLFRGRNYNYRTRPIYPLMLWKPAAPVYPRLVKKIPDGLTPDEAEDMRKRGRQLPPICKLGKNGVYLNLVKQVREAFEACDLVRVDCSGLNKSDCRKIGAKLKDLVPCTLLSFEFEHILMWRGNDWKSSLPPLEENDFKVASDQILNSKEAGSGSALTPIELVNNATSLKKCNLIEGAEKLEDSMKSSFENGMILGSACGNPGVCNSEGIDGTESSADAPIEFSPSNSARDLDPSQTSTLYCQSSLLDKSENGELIEMYPDRCGNSEQSPDVPEALTCLMGSSDEIHELETMRRNCKHLNGSDGVNSDSIVPSYMEGILLLFKQAIDSGMALVLNENEFADANYVYQKSVAFTKTAPRYLVLRHTPRKSHGTQKTEPAKNVRINKHLEEHKVSDHVKKKEIVMGGSRMQRNDHAREFLSDVVPQGTLRVDELAKLLA.

The N-terminal 77 residues, 1–77 (MATSHLTSRS…ENGEPAAGVR (77 aa)), are a transit peptide targeting the chloroplast. 2 CRM domains span residues 183 to 279 (EPLT…TRPI) and 301 to 397 (DGLT…LPPL). A CRS2 binding region spans residues 581 to 603 (GILLLFKQAIDSGMALVLNENEF).

In terms of assembly, interacts with CRS2 and RNA. Part of large ribonucleo-protein complexes that include group IIB introns, CRS2 and CAF1.

It is found in the plastid. It localises to the chloroplast stroma. In terms of biological role, required for the splicing of group IIB introns in chloroplasts. Forms splicing particles with CRS2. Interacts with RNA and confers intron specificity of the splicing particles. This chain is CRS2-associated factor 1, chloroplastic, found in Oryza sativa subsp. japonica (Rice).